We begin with the raw amino-acid sequence, 161 residues long: E3 ubiquitin ligase complex SCF subunit sconC (161 aa).

The interval I103 to E161 is interaction with the F-box domain of F-box proteins.

It belongs to the SKP1 family. Component of the SCF (SKP1-CUL1-F-box protein) E3 ubiquitin ligase complexes.

Its pathway is protein modification; protein ubiquitination. Its function is as follows. Essential component of the SCF (SKP1-CUL1-F-box protein) E3 ubiquitin ligase complexes, which mediate the ubiquitination and subsequent proteasomal degradation of target proteins. Controls sulfur metabolite repression, probably by mediating the inactivation or degradation of the metR transcription factor. In Aspergillus terreus (strain NIH 2624 / FGSC A1156), this protein is E3 ubiquitin ligase complex SCF subunit sconC (sconC).